The sequence spans 384 residues: Odorant receptor 46a, isoform B (384 aa).

At 1–37 (MVTEDFYKYQVWYFQILGVWQLPTWAADHQRRFQSMR) the chain is on the cytoplasmic side. Residues 38–58 (FGFILVILFIMLLLFSFEMLN) traverse the membrane as a helical segment. Residue Asn59 is glycosylated (N-linked (GlcNAc...) asparagine). Topologically, residues 59-65 (NISQVRE) are extracellular. The helical transmembrane segment at 66–86 (ILKVFFMFATEISCMAKLLHL) threads the bilayer. Over 87–130 (KLKSRKLAGLVDAMLSPEFGVKSEQEMQMLELDRVAVVRMRNSY) the chain is Cytoplasmic. Residues 131–151 (GIMSLGAASLILIVPCFDNFG) traverse the membrane as a helical segment. Topologically, residues 152-165 (ELPLAMLEVCSIEG) are extracellular. Residues 166-186 (WICYWSQYLFHSICLLPTCVL) form a helical membrane-spanning segment. At 187–247 (NITYDSVAYS…YNRIVRFKDL (61 aa)) the chain is on the cytoplasmic side. The chain crosses the membrane as a helical span at residues 248–268 (VELFIKGPGSVQLMCSVLVLV). At 269–283 (SNLYDMSTMSIANGD) the chain is on the extracellular side. A helical membrane pass occupies residues 284 to 304 (AIFMLKTCIYQLVMLWQIFII). The Cytoplasmic segment spans residues 305 to 348 (CYASNEVTVQSSRLCHSIYSSQWTGWNRANRRIVLLMMQRFNSP). A helical transmembrane segment spans residues 349–369 (MLLSTFNPTFAFSLEAFGSIV). A glycan (N-linked (GlcNAc...) asparagine) is linked at Asn370. Residues 370–384 (NCSYSYFALLKRVNS) are Extracellular-facing.

The protein belongs to the insect chemoreceptor superfamily. Heteromeric odorant receptor channel (TC 1.A.69) family. Or2a subfamily. In terms of assembly, interacts with Orco. Complexes exist early in the endomembrane system in olfactory sensory neurons (OSNs), coupling these complexes to the conserved ciliary trafficking pathway. In terms of tissue distribution, isoform B is expressed in the antenna.

It is found in the cell membrane. Functionally, odorant receptor which mediates acceptance or avoidance behavior, depending on its substrates. The odorant receptor repertoire encodes a large collection of odor stimuli that vary widely in identity, intensity, and duration. May form a complex with Orco to form odorant-sensing units, providing sensitive and prolonged odorant signaling and calcium permeability. This is Odorant receptor 46a, isoform B (Or46a) from Drosophila melanogaster (Fruit fly).